A 122-amino-acid chain; its full sequence is Large ribosomal subunit protein uL14c (122 aa).

It belongs to the universal ribosomal protein uL14 family. In terms of assembly, part of the 50S ribosomal subunit.

Its subcellular location is the plastid. It localises to the chloroplast. Binds to 23S rRNA. This Porphyra purpurea (Red seaweed) protein is Large ribosomal subunit protein uL14c.